A 205-amino-acid polypeptide reads, in one-letter code: MSNFLHLKYNEKSVSVTKALTVRFLTKRFIGEYASNFESIYKKHLCLERKQLNLEIYDPCSQTQKAKFSLTSELHWADGFVIVYDISDRSSFAFAKALIYRIREPQTSHCKRAVESAVFLVGNKRDLCHVREVGWEEGQKLALENRCQFCELSAAEQSLEVEMMFIRIIKDILINFKLKEKRRPSGSKSMAKLINNVFGKRRKSV.

The tract at residues 1–205 is small GTPase-like; the sequence is MSNFLHLKYN…NVFGKRRKSV (205 aa). Residues 11–18, 58–64, and 123–126 each bind GTP; these read EKSVSVTK, DPCSQTQ, and NKRD.

The protein belongs to the small GTPase superfamily. Ras family.

It carries out the reaction GTP + H2O = GDP + phosphate + H(+). In terms of biological role, binds GDP/GTP and may possess intrinsic GTPase activity. The chain is Ras-related and estrogen-regulated growth inhibitor-like protein (RERGL) from Homo sapiens (Human).